We begin with the raw amino-acid sequence, 166 residues long: Lithostathine-1-beta (166 aa).

Positions 1 to 22 (MAQTNSFFMLISSLMFLSLSQG) are cleaved as a signal peptide. O-linked (GalNAc...) threonine glycosylation occurs at threonine 27. Residues 34–164 (ISCPEGTNAY…EKKFSFVCKF (131 aa)) form the C-type lectin domain. 3 disulfides stabilise this stretch: cysteine 36/cysteine 47, cysteine 64/cysteine 162, and cysteine 137/cysteine 154.

All O-linked glycans consist of Gal-GlcNAc-Gal-GalNAc tetrasaccharide core and get elongated (microheterogeneity).

It localises to the secreted. Its function is as follows. Might act as an inhibitor of spontaneous calcium carbonate precipitation. May be associated with neuronal sprouting in brain, and with brain and pancreas regeneration. The chain is Lithostathine-1-beta (REG1B) from Homo sapiens (Human).